The chain runs to 113 residues: MWGSLCKAPLLRLRPTFAAVSNVKTIHIKASPDYNEGIDKSKPLKFSTSKASHRHWTVAKSLGSNQQRPWWKVVPLSVFLTTVLLWAIFRKETDIDEAIYKPIEQLQDESENK.

Residues M1 to A18 form the signal peptide. Topologically, residues A19–K72 are mitochondrial matrix. The helical transmembrane segment at V73–F89 threads the bilayer. Residues R90–K113 lie on the Mitochondrial intermembrane side of the membrane.

This sequence belongs to the UQCC4 family.

It localises to the mitochondrion inner membrane. Required for the assembly and stability of the mitochondrial ubiquinol-cytochrome c reductase complex (complex III (CIII) or cytochrome b-c1 complex), a multisubunit transmembrane complex that is part of the mitochondrial electron transport chain (ETC) which drives oxidative phosphorylation. The polypeptide is Ubiquinol-cytochrome-c reductase complex assembly factor 4 (uqcc4) (Xenopus tropicalis (Western clawed frog)).